An 81-amino-acid chain; its full sequence is Serine rich endogenous peptide 21 (81 aa).

An N-terminal signal peptide occupies residues 1-40; it reads MLELHFEFIDLNQPKMYKFVVCLLTLSFLLLSGLSNTALA. Residues 65–79 carry the SCOOP motif motif; it reads KVRVLPSASRRGPGQ. The SxS motif essential for MIK2 binding signature appears at 71–73; the sequence is SAS.

The protein belongs to the serine rich endogenous peptide (SCOOP) phytocytokine family. Interacts with MIK2 (via extracellular leucine-rich repeat domain); this interaction triggers the formation of complex between MIK2 and the BAK1/SERK3 and SERK4 coreceptors, and subsequent BAK1 activation by phosphorylation.

It localises to the cell membrane. The protein localises to the secreted. It is found in the extracellular space. Its subcellular location is the apoplast. Brassicaceae-specific phytocytokine (plant endogenous peptide released into the apoplast) perceived by MIK2 in a BAK1/SERK3 and SERK4 coreceptors-dependent manner, that modulates various physiological and antimicrobial processes including growth prevention and reactive oxygen species (ROS) response regulation. The chain is Serine rich endogenous peptide 21 from Arabidopsis thaliana (Mouse-ear cress).